Consider the following 258-residue polypeptide: tRNA pseudouridine synthase A (258 aa).

D54 acts as the Nucleophile in catalysis. Residue Y112 coordinates substrate.

Belongs to the tRNA pseudouridine synthase TruA family. In terms of assembly, homodimer.

The enzyme catalyses uridine(38/39/40) in tRNA = pseudouridine(38/39/40) in tRNA. In terms of biological role, formation of pseudouridine at positions 38, 39 and 40 in the anticodon stem and loop of transfer RNAs. In Geobacillus kaustophilus (strain HTA426), this protein is tRNA pseudouridine synthase A.